The chain runs to 345 residues: NADH-quinone oxidoreductase subunit 8 (345 aa).

8 helical membrane passes run 15-35 (MLLQ…FMVY), 82-102 (FVYF…FVVI), 115-135 (VGIL…IMGG), 161-181 (LGLI…TAIV), 190-210 (LLNW…VSAL), 240-262 (YLLF…SLLF), 278-298 (WWMV…KAIV), and 309-329 (IGWK…AILA).

It belongs to the complex I subunit 1 family. As to quaternary structure, NDH-1 is composed of at least 14 different subunits, Nqo1 to Nqo14. The complex has a L-shaped structure, with the hydrophobic arm (subunits Nqo7, Nqo8, Nqo10 to Nqo14) embedded in the inner membrane and the hydrophilic peripheral arm (subunits Nqo1 to Nqo6, Nqo9) protruding into the bacterial cytoplasm. The hydrophilic domain contains all the redox centers.

The protein localises to the cell inner membrane. It catalyses the reaction a quinone + NADH + 5 H(+)(in) = a quinol + NAD(+) + 4 H(+)(out). Functionally, NDH-1 shuttles electrons from NADH, via FMN and iron-sulfur (Fe-S) centers, to quinones in the respiratory chain. The immediate electron acceptor for the enzyme in this species is believed to be ubiquinone. Couples the redox reaction to proton translocation (for every two electrons transferred, four hydrogen ions are translocated across the cytoplasmic membrane), and thus conserves the redox energy in a proton gradient. The protein is NADH-quinone oxidoreductase subunit 8 of Paracoccus denitrificans.